The chain runs to 199 residues: Chromophore lyase CpcT/CpeT 2 (199 aa).

Belongs to the CpcT/CpeT biliprotein lyase family.

Its function is as follows. Covalently attaches a chromophore to Cys residue(s) of phycobiliproteins. This chain is Chromophore lyase CpcT/CpeT 2, found in Synechococcus sp. (strain JA-3-3Ab) (Cyanobacteria bacterium Yellowstone A-Prime).